A 232-amino-acid chain; its full sequence is Phospholipase A2 hemilipin (232 aa).

The signal sequence occupies residues 1 to 18 (MTFLILTILATVTPSLYS). A propeptide spanning residues 19-105 (HVVQRELRVN…QRCSGSAEGR (87 aa)) is cleaved from the precursor. W115, G117, and G119 together coordinate Ca(2+). 5 cysteine pairs are disulfide-bonded: C116–C137, C136–C175, C143–C168, C166–C206, and C211–C219. N-linked (GlcNAc...) asparagine glycosylation occurs at N124. The active site involves H140. Residue D141 participates in Ca(2+) binding. A glycan (N-linked (GlcNAc...) asparagine) is linked at N157. Positions 214–217 (KRDA) are excised as a propeptide.

Belongs to the phospholipase A2 family. Group III subfamily. In terms of assembly, heterodimer composed of a small subunit and a large subunit; disulfid-linked. Requires Ca(2+) as cofactor. As to expression, expressed by the venom gland.

Its subcellular location is the secreted. The catalysed reaction is a 1,2-diacyl-sn-glycero-3-phosphocholine + H2O = a 1-acyl-sn-glycero-3-phosphocholine + a fatty acid + H(+). Its function is as follows. Scorpion venom phospholipase A2 (PLA2) that shows high hydrolytic activities towards lecithin and acts as an effective blocker of all angiogenesis key steps in vivo and in vitro. It has no effect on apoptosis and does not display hemolytic, inflammatory or neurotoxic effects. PLA2 catalyzes the calcium-dependent hydrolysis of the 2-acyl groups in 3-sn-phosphoglycerides. The chain is Phospholipase A2 hemilipin from Hemiscorpius lepturus (Scorpion).